A 495-amino-acid chain; its full sequence is MPERRTVALVTLGCARNEVDSEELAGRLEADGWQLVEDAEDADVAVVNTCGFVEAAKKDSVDALLEANDLKGHGRTQAVVAVGCMAERYGKELAEALPEADGVLGFDDYTNISDRLQTILNGGIHAAHTPRDRRKLLPISPAERQSAGADVALPGHGAPEGLPEDLPEGLAPESGPRAPLRRRLDGSPVASVKLASGCDRRCSFCAIPSFRGSFISRRPSDVLGETRWLAEQGVKEVMLVSENNTSYGKDLGDIRLLETLLPELAEVDGIERVRVSYLQPAEMRPGLIDVLTSTPKIAPYFDLSFQHSAPDVLRAMRRFGDTDRFLELLDTIRSKAPQAGVRSNFIVGFPGETEADLAELERFLTGARLDAIGVFGYSDEEGTEAATYGHKLDEDVVAARLARVSRLAEELVAQRAEERVGETVHVLVESIDDEEGAVGRAEHQAPETDGQVLFTSGEGLTVGRMVEAKVVGTEGVDLVAEPLPGSLVCTEEAGR.

Positions 5 to 121 (RTVALVTLGC…ISDRLQTILN (117 aa)) constitute an MTTase N-terminal domain. Residues Cys14, Cys50, and Cys84 each coordinate [4Fe-4S] cluster. A disordered region spans residues 145 to 183 (QSAGADVALPGHGAPEGLPEDLPEGLAPESGPRAPLRRR). Residues 184 to 415 (LDGSPVASVK…RLAEELVAQR (232 aa)) enclose the Radical SAM core domain. Residues Cys198, Cys202, and Cys205 each contribute to the [4Fe-4S] cluster site. The TRAM domain maps to 417-484 (EERVGETVHV…GVDLVAEPLP (68 aa)).

Belongs to the methylthiotransferase family. RimO subfamily. The cofactor is [4Fe-4S] cluster.

The protein localises to the cytoplasm. It catalyses the reaction L-aspartate(89)-[ribosomal protein uS12]-hydrogen + (sulfur carrier)-SH + AH2 + 2 S-adenosyl-L-methionine = 3-methylsulfanyl-L-aspartate(89)-[ribosomal protein uS12]-hydrogen + (sulfur carrier)-H + 5'-deoxyadenosine + L-methionine + A + S-adenosyl-L-homocysteine + 2 H(+). Its function is as follows. Catalyzes the methylthiolation of an aspartic acid residue of ribosomal protein uS12. The chain is Ribosomal protein uS12 methylthiotransferase RimO from Streptomyces avermitilis (strain ATCC 31267 / DSM 46492 / JCM 5070 / NBRC 14893 / NCIMB 12804 / NRRL 8165 / MA-4680).